The chain runs to 119 residues: Urease subunit beta (119 aa).

It belongs to the urease beta subunit family. Heterotrimer of UreA (gamma), UreB (beta) and UreC (alpha) subunits. Three heterotrimers associate to form the active enzyme.

The protein resides in the cytoplasm. The catalysed reaction is urea + 2 H2O + H(+) = hydrogencarbonate + 2 NH4(+). The protein operates within nitrogen metabolism; urea degradation; CO(2) and NH(3) from urea (urease route): step 1/1. The protein is Urease subunit beta of Tolumonas auensis (strain DSM 9187 / NBRC 110442 / TA 4).